Here is a 46-residue protein sequence, read N- to C-terminus: Small, acid-soluble spore protein J (46 aa).

The interval 24-46 (EDAGSALKDDPLQEAVQKKKNNR) is disordered.

The protein resides in the spore core. The protein is Small, acid-soluble spore protein J (sspJ) of Bacillus subtilis (strain 168).